The sequence spans 223 residues: uncharacterized protein (223 aa).

The N-terminal 12 residues, 1–12 (MFRSLVRKTTPL), are a transit peptide targeting the mitochondrion.

It localises to the mitochondrion. This is an uncharacterized protein from Candida albicans (strain WO-1) (Yeast).